The sequence spans 205 residues: LexA repressor (205 aa).

Residues 28–48 (IRDIMKHFNFKSPRAAHKHLI) constitute a DNA-binding region (H-T-H motif). Active-site for autocatalytic cleavage activity residues include Ser125 and Lys163.

The protein belongs to the peptidase S24 family. As to quaternary structure, homodimer.

It carries out the reaction Hydrolysis of Ala-|-Gly bond in repressor LexA.. In terms of biological role, represses a number of genes involved in the response to DNA damage (SOS response), including recA and lexA. In the presence of single-stranded DNA, RecA interacts with LexA causing an autocatalytic cleavage which disrupts the DNA-binding part of LexA, leading to derepression of the SOS regulon and eventually DNA repair. In Petrotoga mobilis (strain DSM 10674 / SJ95), this protein is LexA repressor.